A 147-amino-acid chain; its full sequence is Transcriptional regulator MraZ (147 aa).

SpoVT-AbrB domains follow at residues 5-50 (AVAL…PLTA) and 79-122 (AQEE…SDAG).

It belongs to the MraZ family. Forms oligomers.

The protein localises to the cytoplasm. Its subcellular location is the nucleoid. The protein is Transcriptional regulator MraZ of Azoarcus sp. (strain BH72).